The chain runs to 595 residues: Putative capsid protein V20 (595 aa).

Its subcellular location is the virion. May self assemble to form an icosahedral capsid. Most abundant protein in the virion. This Sputnik virophage protein is Putative capsid protein V20.